The sequence spans 358 residues: Peptide chain release factor 1 (358 aa).

The residue at position 232 (Gln232) is an N5-methylglutamine.

This sequence belongs to the prokaryotic/mitochondrial release factor family. Post-translationally, methylated by PrmC. Methylation increases the termination efficiency of RF1.

The protein resides in the cytoplasm. In terms of biological role, peptide chain release factor 1 directs the termination of translation in response to the peptide chain termination codons UAG and UAA. This chain is Peptide chain release factor 1, found in Acidobacterium capsulatum (strain ATCC 51196 / DSM 11244 / BCRC 80197 / JCM 7670 / NBRC 15755 / NCIMB 13165 / 161).